A 71-amino-acid polypeptide reads, in one-letter code: Heat-stable enterotoxin II (71 aa).

The first 23 residues, 1-23, serve as a signal peptide directing secretion; the sequence is MKKNIAFLLASMFVFSIATNAYA. Intrachain disulfides connect Cys33–Cys71 and Cys44–Cys59.

The protein resides in the secreted. Its function is as follows. Toxin which activates the particulate form of guanylate cyclase and increases cyclic GMP levels within the host intestinal epithelial cells. The chain is Heat-stable enterotoxin II (stiI) from Escherichia coli.